Reading from the N-terminus, the 230-residue chain is Urease accessory protein UreG (230 aa).

The disordered stretch occupies residues 1–31; it reads MPPHFLSADSTGQPHRHADRPKRVRTPGEPL. A compositionally biased stretch (basic residues) spans 14 to 25; it reads PHRHADRPKRVR. Position 37-44 (37-44) interacts with GTP; sequence GPVGSGKT.

Belongs to the SIMIBI class G3E GTPase family. UreG subfamily. As to quaternary structure, homodimer. UreD, UreF and UreG form a complex that acts as a GTP-hydrolysis-dependent molecular chaperone, activating the urease apoprotein by helping to assemble the nickel containing metallocenter of UreC. The UreE protein probably delivers the nickel.

The protein resides in the cytoplasm. Facilitates the functional incorporation of the urease nickel metallocenter. This process requires GTP hydrolysis, probably effectuated by UreG. In Mycobacterium sp. (strain JLS), this protein is Urease accessory protein UreG.